We begin with the raw amino-acid sequence, 58 residues long: Large ribosomal subunit protein uL30 (58 aa).

The protein belongs to the universal ribosomal protein uL30 family. As to quaternary structure, part of the 50S ribosomal subunit.

The protein is Large ribosomal subunit protein uL30 of Erythrobacter litoralis (strain HTCC2594).